We begin with the raw amino-acid sequence, 104 residues long: Large ribosomal subunit protein uL23 (104 aa).

The protein belongs to the universal ribosomal protein uL23 family. Part of the 50S ribosomal subunit. Contacts protein L29, and trigger factor when it is bound to the ribosome.

Its function is as follows. One of the early assembly proteins it binds 23S rRNA. One of the proteins that surrounds the polypeptide exit tunnel on the outside of the ribosome. Forms the main docking site for trigger factor binding to the ribosome. The polypeptide is Large ribosomal subunit protein uL23 (Cupriavidus metallidurans (strain ATCC 43123 / DSM 2839 / NBRC 102507 / CH34) (Ralstonia metallidurans)).